The sequence spans 395 residues: Elongation factor Tu (395 aa).

The tr-type G domain occupies 10–204 (LPHVNIGTIG…AVDEYIPTPQ (195 aa)). The G1 stretch occupies residues 19 to 26 (GHVDHGKT). 19–26 (GHVDHGKT) is a binding site for GTP. T26 lines the Mg(2+) pocket. The interval 60–64 (GITIN) is G2. The G3 stretch occupies residues 81 to 84 (DCPG). GTP contacts are provided by residues 81–85 (DCPGH) and 136–139 (NKCD). The interval 136 to 139 (NKCD) is G4. The interval 174 to 176 (SAL) is G5.

The protein belongs to the TRAFAC class translation factor GTPase superfamily. Classic translation factor GTPase family. EF-Tu/EF-1A subfamily. Monomer.

It localises to the cytoplasm. The catalysed reaction is GTP + H2O = GDP + phosphate + H(+). Its function is as follows. GTP hydrolase that promotes the GTP-dependent binding of aminoacyl-tRNA to the A-site of ribosomes during protein biosynthesis. The polypeptide is Elongation factor Tu (Mycoplasma capricolum subsp. capricolum (strain California kid / ATCC 27343 / NCTC 10154)).